The chain runs to 909 residues: Aconitate hydratase A (909 aa).

Residues Cys-450, Cys-516, and Cys-519 each contribute to the [4Fe-4S] cluster site.

The protein belongs to the aconitase/IPM isomerase family. In terms of assembly, monomer. It depends on [4Fe-4S] cluster as a cofactor.

The catalysed reaction is citrate = D-threo-isocitrate. The enzyme catalyses 3-hydroxybutane-1,2,3-tricarboxylate = 2-methyl-cis-aconitate + H2O. It participates in carbohydrate metabolism; tricarboxylic acid cycle; isocitrate from oxaloacetate: step 2/2. Involved in both the tricarboxylic acid (TCA) and methylcitric acid cycles. Catalyzes the reversible isomerization of citrate to isocitrate via cis-aconitate. Also catalyzes the rehydration of 2-methyl-cis-aconitate to produce 2-methylisocitrate. The apo form of AcnA functions as a RNA-binding regulatory protein which plays a role in the regulation of citrate concentration and in the sporulation. To prevent the accumulation of excessive levels of citrate, it binds near the 5' end of the citZ mRNA, decreasing its stability and thereby limiting the concentration of citrate synthase in the cell. Aconitase also binds to the gerE transcript late in sporulation and stabilizes it for translation, thereby increasing the rate and level of GerE protein accumulation. The protein is Aconitate hydratase A (citB) of Bacillus subtilis (strain 168).